The sequence spans 259 residues: S-methyl-5'-thioadenosine phosphorylase (259 aa).

Phosphate is bound by residues Ser-9 and 50 to 51 (RH). Position 175 (Met-175) interacts with substrate. Phosphate is bound at residue Thr-176. 199–201 (DLD) serves as a coordination point for substrate.

The protein belongs to the PNP/MTAP phosphorylase family. MTAP subfamily. In terms of assembly, homohexamer. Dimer of a homotrimer.

It carries out the reaction S-methyl-5'-thioadenosine + phosphate = 5-(methylsulfanyl)-alpha-D-ribose 1-phosphate + adenine. Its pathway is amino-acid biosynthesis; L-methionine biosynthesis via salvage pathway; S-methyl-5-thio-alpha-D-ribose 1-phosphate from S-methyl-5'-thioadenosine (phosphorylase route): step 1/1. Catalyzes the reversible phosphorylation of S-methyl-5'-thioadenosine (MTA) to adenine and 5-methylthioribose-1-phosphate. Involved in the breakdown of MTA, a major by-product of polyamine biosynthesis. Responsible for the first step in the methionine salvage pathway after MTA has been generated from S-adenosylmethionine. Has broad substrate specificity with 6-aminopurine nucleosides as preferred substrates. The protein is S-methyl-5'-thioadenosine phosphorylase of Mycolicibacterium smegmatis (strain ATCC 700084 / mc(2)155) (Mycobacterium smegmatis).